Here is a 341-residue protein sequence, read N- to C-terminus: 5-formaminoimidazole-4-carboxamide-1-(beta)-D-ribofuranosyl 5'-monophosphate synthetase (341 aa).

5-amino-1-(5-phospho-beta-D-ribosyl)imidazole-4-carboxamide contacts are provided by H10 and T77. Residues D106–M317 enclose the ATP-grasp domain. ATP contacts are provided by residues E132 to Y188 and E210. N238 contributes to the 5-amino-1-(5-phospho-beta-D-ribosyl)imidazole-4-carboxamide binding site. E277 and E290 together coordinate Mg(2+).

Belongs to the phosphohexose mutase family. It depends on Mg(2+) as a cofactor. Mn(2+) serves as cofactor.

It catalyses the reaction 5-amino-1-(5-phospho-beta-D-ribosyl)imidazole-4-carboxamide + formate + ATP = 5-formamido-1-(5-phospho-D-ribosyl)imidazole-4-carboxamide + ADP + phosphate. It participates in purine metabolism; IMP biosynthesis via de novo pathway; 5-formamido-1-(5-phospho-D-ribosyl)imidazole-4-carboxamide from 5-amino-1-(5-phospho-D-ribosyl)imidazole-4-carboxamide (formate route): step 1/1. Functionally, catalyzes the ATP- and formate-dependent formylation of 5-aminoimidazole-4-carboxamide-1-beta-d-ribofuranosyl 5'-monophosphate (AICAR) to 5-formaminoimidazole-4-carboxamide-1-beta-d-ribofuranosyl 5'-monophosphate (FAICAR) in the absence of folates. The chain is 5-formaminoimidazole-4-carboxamide-1-(beta)-D-ribofuranosyl 5'-monophosphate synthetase from Nitrosopumilus maritimus (strain SCM1).